The chain runs to 306 residues: MTNPLYKKHVISISDLTRPDMELVVATAQRLKAEPDTRLLKDKLVASCFFEASTRTRLSFETAVQRLGGNIIGFADGGNTSAKKGETLADSIKIIGSYTDAVVMRHPKEGAARLASEFSRVPVINGGDGSNQHPTQTLLDLFSIHETQGKLDGLNVAFVGDLKYGRTVHSLAQALSLFNCRFFFISPEALAMPDYICEELEEKGIQFSVHETMEEVMPELDILYMTRVQKERFDETEYKHMAAKFVLEVATLEGAKPTMKILHPLPRVDEIDVAVDKTPHAYYFQQAENGVYARQALLALVLNETV.

The carbamoyl phosphate site is built by Arg-55 and Thr-56. Lys-84 provides a ligand contact to L-aspartate. Arg-105, His-133, and Gln-136 together coordinate carbamoyl phosphate. Positions 166 and 227 each coordinate L-aspartate. Positions 265 and 266 each coordinate carbamoyl phosphate.

Belongs to the aspartate/ornithine carbamoyltransferase superfamily. ATCase family. Heterododecamer (2C3:3R2) of six catalytic PyrB chains organized as two trimers (C3), and six regulatory PyrI chains organized as three dimers (R2).

It carries out the reaction carbamoyl phosphate + L-aspartate = N-carbamoyl-L-aspartate + phosphate + H(+). It participates in pyrimidine metabolism; UMP biosynthesis via de novo pathway; (S)-dihydroorotate from bicarbonate: step 2/3. Catalyzes the condensation of carbamoyl phosphate and aspartate to form carbamoyl aspartate and inorganic phosphate, the committed step in the de novo pyrimidine nucleotide biosynthesis pathway. This is Aspartate carbamoyltransferase catalytic subunit from Aeromonas hydrophila subsp. hydrophila (strain ATCC 7966 / DSM 30187 / BCRC 13018 / CCUG 14551 / JCM 1027 / KCTC 2358 / NCIMB 9240 / NCTC 8049).